The following is a 576-amino-acid chain: Epsin-1 (576 aa).

A 1,2-diacyl-sn-glycero-3-phospho-(1D-myo-inositol-4,5-bisphosphate)-binding residues include arginine 8, lysine 11, arginine 25, asparagine 30, arginine 63, and histidine 73. Residues 12–144 enclose the ENTH domain; that stretch reads NIVHNYSEAE…RDEDRLREER (133 aa). Residues 149–185 are disordered; that stretch reads KTKEKLAQTATASSAAVGSGPPPEAEQAWPQSSGEEE. Residues 157-167 show a composition bias toward low complexity; sequence TATASSAAVGS. UIM domains are found at residues 183–202, 208–227, and 233–252; these read EEEL…ADQP, EDDA…HDKE, and GDDL…TGGK. Over residues 265–296 the composition is skewed to low complexity; that stretch reads TAPAPAPTTDPWGGPAPMAAAVPTAAPTSDPW. A disordered region spans residues 265–404; sequence TAPAPAPTTD…GGFDTEPDEF (140 aa). 8 repeat units span residues 274-276, 294-296, 306-308, 319-321, 332-334, 349-351, 367-369, and 377-379. The interval 274-379 is 8 X 3 AA repeats of [ED]-P-W; it reads DPWGGPAPMA…TPAPAFSDPW (106 aa). The span at 297 to 314 shows a compositional bias: pro residues; it reads GGPPVPPAADPWGGPAPT. A compositionally biased stretch (low complexity) spans 332-368; that stretch reads DPWGGTPAPAAGEGPTPDPWGSSDGGVPVSGPSASDP. Serine 382 is modified (phosphoserine; by CDK1). Positions 402 to 411 match the [DE]-X(1,2)-F-X-X-[FL]-X-X-X-R motif motif; that stretch reads DEFSDFDRLR. 5 positions are modified to phosphoserine: serine 419, serine 420, serine 435, serine 447, and serine 454. A disordered region spans residues 448 to 576; that stretch reads LAEAVGSPPP…PAPNTNPFLL (129 aa). Residues 454–468 are compositionally biased toward pro residues; sequence SPPPAATPTPTPPTR. Threonine 460, threonine 464, and threonine 470 each carry phosphothreonine. Serine 473 is modified (phosphoserine). Threonine 494 carries the phosphothreonine modification. 2 consecutive repeat copies span residues 502-504 and 518-520. The 3 X 3 AA repeats of N-P-F stretch occupies residues 502 to 574; the sequence is NPFLPGGGPA…GPPAPNTNPF (73 aa). Arginine 534 carries the post-translational modification Omega-N-methylarginine. Positions 557–570 are enriched in pro residues; the sequence is GLPPMMPPGPPAPN. The stretch at 572 to 574 is repeat 3; the sequence is NPF.

Belongs to the epsin family. Monomer. Binds clathrin, ZBTB16/ZNF145 and ITSN1. Binds ubiquitinated proteins. Binds AP2A1 and AP2A2. Interacts with RALBP1 in a complex also containing NUMB and TFAP2A during interphase and mitosis. Interacts with AP2B1. Interacts with UBQLN2. Interacts with REPS2; the interaction is direct. Interacts with EPS15; the interaction is direct. Interacts with ENTREP1. In terms of processing, phosphorylated on serine and/or threonine residues in mitotic cells. Phosphorylation reduces interaction with REPS2, AP-2 and the membrane fraction. Depolarization of synaptosomes results in dephosphorylation. Ubiquitinated.

The protein localises to the cytoplasm. It is found in the cell membrane. Its subcellular location is the nucleus. The protein resides in the membrane. It localises to the clathrin-coated pit. Its function is as follows. Binds to membranes enriched in phosphatidylinositol 4,5-bisphosphate (PtdIns(4,5)P2). Modifies membrane curvature and facilitates the formation of clathrin-coated invaginations. Regulates receptor-mediated endocytosis. This chain is Epsin-1 (EPN1), found in Homo sapiens (Human).